The primary structure comprises 121 residues: Protein yippee (121 aa).

One can recognise a Yippee domain in the interval 13-110 (KLFNCAQCHT…LEYALITEAE (98 aa)). Cysteine 17, cysteine 20, cysteine 73, and cysteine 76 together coordinate Zn(2+).

This sequence belongs to the yippee family. In terms of assembly, interacts with hemolin.

In Drosophila melanogaster (Fruit fly), this protein is Protein yippee.